A 31-amino-acid polypeptide reads, in one-letter code: GVIPCGESCVFIPCISAAIGCSCKNKVCYRN.

Positions 1–31 (GVIPCGESCVFIPCISAAIGCSCKNKVCYRN) form a cross-link, cyclopeptide (Gly-Asn). Intrachain disulfides connect C5/C21, C9/C23, and C14/C28.

This is a cyclic peptide.

In terms of biological role, probably participates in a plant defense mechanism. Has anti-HIV activity. The polypeptide is Cycloviolin-A (Leonia cymosa (Sacha uba)).